The following is a 214-amino-acid chain: UPF0056 membrane protein aq_540 (214 aa).

Transmembrane regions (helical) follow at residues 17–37 (FLSL…ISLM), 47–67 (VIAL…LISG), 73–93 (FMGI…FLIA), 122–142 (LIPL…VLVL), 153–173 (VALF…YSLS), and 185–205 (INLI…QFVV).

This sequence belongs to the UPF0056 (MarC) family.

It localises to the cell membrane. The chain is UPF0056 membrane protein aq_540 from Aquifex aeolicus (strain VF5).